The following is a 287-amino-acid chain: Bifunctional protein FolD (287 aa).

NADP(+) contacts are provided by residues 169 to 171 and S194; that span reads GRS.

Belongs to the tetrahydrofolate dehydrogenase/cyclohydrolase family. As to quaternary structure, homodimer.

The enzyme catalyses (6R)-5,10-methylene-5,6,7,8-tetrahydrofolate + NADP(+) = (6R)-5,10-methenyltetrahydrofolate + NADPH. It catalyses the reaction (6R)-5,10-methenyltetrahydrofolate + H2O = (6R)-10-formyltetrahydrofolate + H(+). The protein operates within one-carbon metabolism; tetrahydrofolate interconversion. Catalyzes the oxidation of 5,10-methylenetetrahydrofolate to 5,10-methenyltetrahydrofolate and then the hydrolysis of 5,10-methenyltetrahydrofolate to 10-formyltetrahydrofolate. The chain is Bifunctional protein FolD from Albidiferax ferrireducens (strain ATCC BAA-621 / DSM 15236 / T118) (Rhodoferax ferrireducens).